The following is a 119-amino-acid chain: Holo-[acyl-carrier-protein] synthase (119 aa).

Mg(2+) is bound by residues aspartate 8 and glutamate 58.

The protein belongs to the P-Pant transferase superfamily. AcpS family. It depends on Mg(2+) as a cofactor.

It is found in the cytoplasm. The enzyme catalyses apo-[ACP] + CoA = holo-[ACP] + adenosine 3',5'-bisphosphate + H(+). Transfers the 4'-phosphopantetheine moiety from coenzyme A to a Ser of acyl-carrier-protein. The chain is Holo-[acyl-carrier-protein] synthase from Bacillus cereus (strain ATCC 10987 / NRS 248).